The primary structure comprises 603 residues: Beta-glucuronidase (603 aa).

Residues aspartate 163 and asparagine 412 each coordinate D-glucuronate. The Proton donor role is filled by glutamate 413. Positions 466, 472, 504, 549, and 568 each coordinate D-glucuronate. Glutamate 504 serves as the catalytic Nucleophile. Positions 566-568 match the N-K motif motif; it reads NKK.

The protein belongs to the glycosyl hydrolase 2 family. Homotetramer.

It carries out the reaction a beta-D-glucuronoside + H2O = D-glucuronate + an alcohol. The catalysed reaction is 4-methylumbelliferone beta-D-glucuronate + H2O = 4-methylumbelliferone + D-glucuronate. Potently inhibited by a set of synthetic compounds like thio-urea derivatives and analogs, and uronic isofagomine (UIFG) derivatives. Inhibitors of gut microbial beta-glucuronidases block the reactivation of glucuronidated cancer drugs, and thereby alleviate drug-induced GI toxicity. Functionally, displays beta-glucuronidase activity with the artificial substrate p-nitrophenyl-beta-D-glucuronide (PNPG) and with 4-methylumbelliferyl-glucuronide. Is likely capable of scavenging glucuronate from a range of chemically distinct xenobiotic and endobiotic glucuronides present in the gastrointestinal (GI) tract, to be able to utilize these diverse sources of carbon. As part of the GI microbiome, this enzyme is able to reactivate glucuronide drug conjugates, such reactivated compounds can significantly damage the GI tract. The polypeptide is Beta-glucuronidase (uidA) (Escherichia coli (strain K12)).